The sequence spans 94 residues: Pyrimidine/purine nucleoside phosphorylase (94 aa).

It belongs to the nucleoside phosphorylase PpnP family.

The catalysed reaction is a purine D-ribonucleoside + phosphate = a purine nucleobase + alpha-D-ribose 1-phosphate. The enzyme catalyses adenosine + phosphate = alpha-D-ribose 1-phosphate + adenine. It catalyses the reaction cytidine + phosphate = cytosine + alpha-D-ribose 1-phosphate. It carries out the reaction guanosine + phosphate = alpha-D-ribose 1-phosphate + guanine. The catalysed reaction is inosine + phosphate = alpha-D-ribose 1-phosphate + hypoxanthine. The enzyme catalyses thymidine + phosphate = 2-deoxy-alpha-D-ribose 1-phosphate + thymine. It catalyses the reaction uridine + phosphate = alpha-D-ribose 1-phosphate + uracil. It carries out the reaction xanthosine + phosphate = alpha-D-ribose 1-phosphate + xanthine. Catalyzes the phosphorolysis of diverse nucleosides, yielding D-ribose 1-phosphate and the respective free bases. Can use uridine, adenosine, guanosine, cytidine, thymidine, inosine and xanthosine as substrates. Also catalyzes the reverse reactions. In Pseudomonas putida (strain ATCC 700007 / DSM 6899 / JCM 31910 / BCRC 17059 / LMG 24140 / F1), this protein is Pyrimidine/purine nucleoside phosphorylase.